A 242-amino-acid chain; its full sequence is UPF0273 protein MJ1359 (242 aa).

Residues 2–242 (KRVKTGIPGM…VYPDKVLKLR (241 aa)) enclose the KaiC domain. 29–36 (GGPGTGKS) contacts ATP.

This sequence belongs to the UPF0273 family.

The sequence is that of UPF0273 protein MJ1359 from Methanocaldococcus jannaschii (strain ATCC 43067 / DSM 2661 / JAL-1 / JCM 10045 / NBRC 100440) (Methanococcus jannaschii).